We begin with the raw amino-acid sequence, 194 residues long: Protein GrpE (194 aa).

Residues 1–12 show a composition bias toward basic and acidic residues; sequence MNKQKNNRERTP. The interval 1–44 is disordered; it reads MNKQKNNRERTPQPEQDTERDEQLTNSHENDIDSAPAAEENDKV.

This sequence belongs to the GrpE family. Homodimer.

It localises to the cytoplasm. In terms of biological role, participates actively in the response to hyperosmotic and heat shock by preventing the aggregation of stress-denatured proteins, in association with DnaK and GrpE. It is the nucleotide exchange factor for DnaK and may function as a thermosensor. Unfolded proteins bind initially to DnaJ; upon interaction with the DnaJ-bound protein, DnaK hydrolyzes its bound ATP, resulting in the formation of a stable complex. GrpE releases ADP from DnaK; ATP binding to DnaK triggers the release of the substrate protein, thus completing the reaction cycle. Several rounds of ATP-dependent interactions between DnaJ, DnaK and GrpE are required for fully efficient folding. The sequence is that of Protein GrpE from Porphyromonas gingivalis (strain ATCC 33277 / DSM 20709 / CIP 103683 / JCM 12257 / NCTC 11834 / 2561).